The sequence spans 205 residues: Guanylyl cyclase-activating protein 1 (205 aa).

The N-myristoyl glycine moiety is linked to residue G2. N3 bears the Deamidated asparagine mark. EF-hand domains follow at residues 30 to 48, 50 to 85, 86 to 121, and 129 to 164; these read SGQL…KNLS, ASNQ…VLKG, KVEQ…IRAI, and TAEE…DELL. Ca(2+) contacts are provided by D63, N65, D67, Y69, E74, D99, D101, N103, C105, E110, D142, N144, D146, E148, and E153.

Retina.

Functionally, regulatory protein that inhibits guanylyl cyclase when free calcium ions concentration is elevated. This Ca(2+)-sensitive regulation of retinal guanylyl cyclase is a key event in recovery of the dark state of rod photoreceptors following light exposure. The sequence is that of Guanylyl cyclase-activating protein 1 (GUCA1A) from Lithobates pipiens (Northern leopard frog).